Reading from the N-terminus, the 622-residue chain is WD repeat-containing protein 70 (622 aa).

Basic and acidic residues predominate over residues 37–55; sequence TAVERSKKTLEAREKEEQI. Residues 37–141 form a disordered region; sequence TAVERSKKTL…DNPVKGIPDS (105 aa). Low complexity predominate over residues 67–84; that stretch reads SSSRQKNTDTSSSSSGSE. Acidic residues predominate over residues 120–132; sequence SDDEDEEQHEDDD. WD repeat units lie at residues 148-187, 195-236, 249-289, 298-337, 344-383, 389-434, and 437-476; these read HGTK…ASLQ, CECH…ECVK, GHTA…KHKG, GKRV…HTKF, TPGT…NPLN, ANYF…KVYE, and VTEA…QRGA. Basic and acidic residues predominate over residues 508–533; that stretch reads REPRQRSTRKQLEKDRLDPVKSHKPE. 2 disordered regions span residues 508-549 and 602-622; these read REPR…GTHG and AEVE…KRKI. The span at 539–549 shows a compositional bias: gly residues; it reads PGRGGRVGTHG. The segment covering 604-614 has biased composition (acidic residues); the sequence is VESDEEETDNE.

Belongs to the WD repeat GAD-1 family.

The polypeptide is WD repeat-containing protein 70 (wdr70) (Xenopus tropicalis (Western clawed frog)).